Consider the following 86-residue polypeptide: UPF0457 protein SERP1772 (86 aa).

The protein belongs to the UPF0457 family.

This is UPF0457 protein SERP1772 from Staphylococcus epidermidis (strain ATCC 35984 / DSM 28319 / BCRC 17069 / CCUG 31568 / BM 3577 / RP62A).